A 551-amino-acid chain; its full sequence is HTH-type transcriptional regulator SgrR (551 aa).

Positions methionine 1 to arginine 116 constitute an HTH marR-type domain. A DNA-binding region (H-T-H motif) is located at residues leucine 26–aspartate 49. A solute-binding region spans residues glutamate 163 to tryptophan 492.

Functionally, activates the small RNA gene sgrS under glucose-phosphate stress conditions as well as yfdZ. Represses its own transcription under both stress and non-stress conditions. Might act as a sensor of the intracellular accumulation of phosphoglucose by binding these molecules in its C-terminal solute-binding domain. This is HTH-type transcriptional regulator SgrR from Escherichia coli O6:K15:H31 (strain 536 / UPEC).